Consider the following 238-residue polypeptide: Ribitol-5-phosphate cytidylyltransferase (238 aa).

CTP-binding positions include 7 to 10 and 81 to 87; these read LAGG and GSDRNET.

It belongs to the IspD/TarI cytidylyltransferase family. TarI subfamily.

It catalyses the reaction D-ribitol 5-phosphate + CTP + H(+) = CDP-L-ribitol + diphosphate. Its pathway is cell wall biogenesis; poly(ribitol phosphate) teichoic acid biosynthesis. Its function is as follows. Catalyzes the transfer of the cytidylyl group of CTP to D-ribitol 5-phosphate. This Staphylococcus saprophyticus subsp. saprophyticus (strain ATCC 15305 / DSM 20229 / NCIMB 8711 / NCTC 7292 / S-41) protein is Ribitol-5-phosphate cytidylyltransferase.